A 73-amino-acid polypeptide reads, in one-letter code: Toxin Td10 (73 aa).

The signal sequence occupies residues 1 to 7 (IGMVVEC). In terms of domain architecture, LCN-type CS-alpha/beta spans 8 to 70 (KDGYLMGPDG…VWERATNRCG (63 aa)). Intrachain disulfides connect cysteine 18–cysteine 69, cysteine 22–cysteine 44, cysteine 30–cysteine 50, and cysteine 34–cysteine 52. A Lysine amide modification is found at lysine 71.

Belongs to the long (4 C-C) scorpion toxin superfamily. Sodium channel inhibitor family. Beta subfamily. In terms of tissue distribution, expressed by the venom gland.

It is found in the secreted. Beta toxins bind voltage-independently at site-4 of sodium channels (Nav) and shift the voltage of activation toward more negative potentials thereby affecting sodium channel activation and promoting spontaneous and repetitive firing. The sequence is that of Toxin Td10 from Tityus discrepans (Venezuelan scorpion).